A 238-amino-acid polypeptide reads, in one-letter code: Ribonuclease PH (238 aa).

Phosphate contacts are provided by residues Arg-86 and Gly-124–Arg-126.

The protein belongs to the RNase PH family. As to quaternary structure, homohexameric ring arranged as a trimer of dimers.

It catalyses the reaction tRNA(n+1) + phosphate = tRNA(n) + a ribonucleoside 5'-diphosphate. Functionally, phosphorolytic 3'-5' exoribonuclease that plays an important role in tRNA 3'-end maturation. Removes nucleotide residues following the 3'-CCA terminus of tRNAs; can also add nucleotides to the ends of RNA molecules by using nucleoside diphosphates as substrates, but this may not be physiologically important. Probably plays a role in initiation of 16S rRNA degradation (leading to ribosome degradation) during starvation. This chain is Ribonuclease PH, found in Serratia proteamaculans (strain 568).